The following is a 350-amino-acid chain: Probable aldo-keto reductase 1 (350 aa).

The active-site Proton donor is the Tyr-67. His-135 is a substrate binding site. 214–224 (SPLGKGFFSSG) is an NADP(+) binding site.

Belongs to the aldo/keto reductase family.

This chain is Probable aldo-keto reductase 1, found in Oryza sativa subsp. indica (Rice).